The chain runs to 217 residues: Adenylate kinase (217 aa).

Residue 10-15 (GGGKGT) participates in ATP binding. The interval 30 to 59 (STGDMLRAAVASGSEVGKKAKAVMDAGQLV) is NMP. Residues Thr-31, Arg-36, 57–59 (QLV), 85–88 (GFPR), and Gln-92 contribute to the AMP site. The LID stretch occupies residues 126–164 (GRYTCAKCGAGYHDKFQLPQVAGKCDSCGGTEFARRPDD). Arg-127 provides a ligand contact to ATP. 4 residues coordinate Zn(2+): Cys-130, Cys-133, Cys-150, and Cys-153. Residues Arg-161 and Arg-172 each contribute to the AMP site. Met-200 lines the ATP pocket.

This sequence belongs to the adenylate kinase family. In terms of assembly, monomer.

It is found in the cytoplasm. It carries out the reaction AMP + ATP = 2 ADP. It functions in the pathway purine metabolism; AMP biosynthesis via salvage pathway; AMP from ADP: step 1/1. Its function is as follows. Catalyzes the reversible transfer of the terminal phosphate group between ATP and AMP. Plays an important role in cellular energy homeostasis and in adenine nucleotide metabolism. The protein is Adenylate kinase of Paramagnetospirillum magneticum (strain ATCC 700264 / AMB-1) (Magnetospirillum magneticum).